A 93-amino-acid polypeptide reads, in one-letter code: Small ribosomal subunit protein uS17 (93 aa).

It belongs to the universal ribosomal protein uS17 family. Part of the 30S ribosomal subunit.

Its function is as follows. One of the primary rRNA binding proteins, it binds specifically to the 5'-end of 16S ribosomal RNA. The polypeptide is Small ribosomal subunit protein uS17 (Corynebacterium aurimucosum (strain ATCC 700975 / DSM 44827 / CIP 107346 / CN-1) (Corynebacterium nigricans)).